A 475-amino-acid chain; its full sequence is Lipid II flippase MurJ (475 aa).

The Cytoplasmic segment spans residues 1 to 2 (MS). Residues 3–23 (ILFSSILFSIATFFSRILGLF) form a helical membrane-spanning segment. Over 24–35 (RDVLFAKYFGVS) the chain is Periplasmic. A helical transmembrane segment spans residues 36-56 (YELDAYFIAIMFPFFLRKVFG). At 57 to 78 (EGAMSSAFVPLYSEKSGEEKDK) the chain is on the cytoplasmic side. A helical membrane pass occupies residues 79-99 (FLSSVINGFSLIILALVILSY). Over 100–123 (FFPELIINLFGAGSSHETKILAKK) the chain is Periplasmic. A helical membrane pass occupies residues 124-144 (LLLITSPSIYFIFLWAISYSI). The Cytoplasmic portion of the chain corresponds to 145–150 (LNTNNK). A helical transmembrane segment spans residues 151 to 171 (FFWPALTPSISNITIIIGTFL). The Periplasmic portion of the chain corresponds to 172-175 (STKY). The chain crosses the membrane as a helical span at residues 176 to 196 (GIISPTIGFLIGSILMFFSII). Over 197 to 213 (KSIIKHKYYFTIKHFPH) the chain is Cytoplasmic. A helical membrane pass occupies residues 214-238 (FLKLFFPTFMTMVVSQINTVVDMNV). At 239–249 (VSFYDKGSISY) the chain is on the periplasmic side. Residues 250–271 (LQYASRFYLLPYGLFAVSVSTV) traverse the membrane as a helical segment. The Cytoplasmic portion of the chain corresponds to 272–287 (VLSKISNDRKNFNYHL). Residues 288–308 (NDALKTTLFFTIPSMVGLIFL) traverse the membrane as a helical segment. The Periplasmic segment spans residues 309–332 (STPIIRFFYEHGAFTSKDTLITSK). A helical transmembrane segment spans residues 333–353 (ILIAYTLGLPFYGIYSTISRS). Topologically, residues 354-362 (YHAIKNTKT) are cytoplasmic. Residues 363–383 (PFIAATIVSLSNIILDIIFGL) form a helical membrane-spanning segment. Topologically, residues 384–386 (KYG) are periplasmic. Residues 387 to 407 (PIGVALATSIAGIIGVLYLLF) traverse the membrane as a helical segment. The Cytoplasmic segment spans residues 408–416 (SVKTFPIKD). A helical transmembrane segment spans residues 417 to 437 (FLKISLNSLIMLFVIYLTDFT). Residues 438–440 (DNE) lie on the Periplasmic side of the membrane. The helical transmembrane segment at 441–461 (FWFLIQILIGILVYLIFSSIF) threads the bilayer. Residues 462–475 (YRDLIRRFLYARKK) are Cytoplasmic-facing.

Belongs to the MurJ/MviN family.

The protein localises to the cell inner membrane. It functions in the pathway cell wall biogenesis; peptidoglycan biosynthesis. Involved in peptidoglycan biosynthesis. Transports lipid-linked peptidoglycan precursors from the inner to the outer leaflet of the cytoplasmic membrane. The protein is Lipid II flippase MurJ of Thermosipho africanus (strain TCF52B).